We begin with the raw amino-acid sequence, 785 residues long: Probable splicing factor 3A subunit 1 (785 aa).

An N-acetylmethionine modification is found at Met1. Residues 1 to 42 (MFSSMQILPLEAPPTDGKLGPLPPSQLTDQEVEERELQAEQN) form a disordered region. An SURP motif 1 repeat occupies 71–113 (IVEKTAQFVSKNGLEFEKRIIVSNEKNAKFNFLKSSDPYHAFY). The segment at 124-175 (NKDGAQGTDDSDGTTDPQLDTGAADESEAGDTQPDLQAQFRIPSKPLEAPEP) is disordered. The SURP motif 2 repeat unit spans residues 193-235 (IIKLTAQFVARNGKSFLTGLSNRENNNPQFHFMKPTHSMFTFF). Disordered regions lie at residues 522–554 (NANGEEQGDGVYGDPNSFPGPAALPPPRPGVPI) and 639–713 (RPYG…PNEN). Pro residues-rich tracts occupy residues 543–554 (AALPPPRPGVPI) and 653–674 (QPPPMPGMAPPPPPEEAPPPLP). Basic and acidic residues predominate over residues 677 to 686 (PEAKRQKFDE). The Ubiquitin-like domain maps to 707-782 (VSKPNENDGQ…LTLSLRERGG (76 aa)).

In terms of assembly, component of splicing factor SF3A which is composed of three subunits.

Its subcellular location is the nucleus. The polypeptide is Probable splicing factor 3A subunit 1 (Arabidopsis thaliana (Mouse-ear cress)).